A 284-amino-acid chain; its full sequence is Bifunctional protein FolD (284 aa).

Residues 165–167, Ser-190, and Ile-231 contribute to the NADP(+) site; that span reads GAS.

It belongs to the tetrahydrofolate dehydrogenase/cyclohydrolase family. In terms of assembly, homodimer.

The enzyme catalyses (6R)-5,10-methylene-5,6,7,8-tetrahydrofolate + NADP(+) = (6R)-5,10-methenyltetrahydrofolate + NADPH. It carries out the reaction (6R)-5,10-methenyltetrahydrofolate + H2O = (6R)-10-formyltetrahydrofolate + H(+). Its pathway is one-carbon metabolism; tetrahydrofolate interconversion. Functionally, catalyzes the oxidation of 5,10-methylenetetrahydrofolate to 5,10-methenyltetrahydrofolate and then the hydrolysis of 5,10-methenyltetrahydrofolate to 10-formyltetrahydrofolate. The polypeptide is Bifunctional protein FolD (Polynucleobacter necessarius subsp. necessarius (strain STIR1)).